Here is a 146-residue protein sequence, read N- to C-terminus: Hemoglobin subunit beta (146 aa).

The region spanning 2–146 (HWSAEEKQLI…VAHALARKYH (145 aa)) is the Globin domain. Residues His63 and His92 each coordinate heme b.

This sequence belongs to the globin family. In terms of assembly, heterotetramer of two alpha chains and two beta chains. Red blood cells.

Functionally, involved in oxygen transport from the lung to the various peripheral tissues. This Anseranas semipalmata (Magpie goose) protein is Hemoglobin subunit beta (HBB).